Here is a 556-residue protein sequence, read N- to C-terminus: 2-succinyl-5-enolpyruvyl-6-hydroxy-3-cyclohexene-1-carboxylate synthase (556 aa).

Belongs to the TPP enzyme family. MenD subfamily. As to quaternary structure, homodimer. Mg(2+) serves as cofactor. Mn(2+) is required as a cofactor. Requires thiamine diphosphate as cofactor.

It catalyses the reaction isochorismate + 2-oxoglutarate + H(+) = 5-enolpyruvoyl-6-hydroxy-2-succinyl-cyclohex-3-ene-1-carboxylate + CO2. It functions in the pathway quinol/quinone metabolism; 1,4-dihydroxy-2-naphthoate biosynthesis; 1,4-dihydroxy-2-naphthoate from chorismate: step 2/7. It participates in quinol/quinone metabolism; menaquinone biosynthesis. In terms of biological role, catalyzes the thiamine diphosphate-dependent decarboxylation of 2-oxoglutarate and the subsequent addition of the resulting succinic semialdehyde-thiamine pyrophosphate anion to isochorismate to yield 2-succinyl-5-enolpyruvyl-6-hydroxy-3-cyclohexene-1-carboxylate (SEPHCHC). The chain is 2-succinyl-5-enolpyruvyl-6-hydroxy-3-cyclohexene-1-carboxylate synthase from Citrobacter koseri (strain ATCC BAA-895 / CDC 4225-83 / SGSC4696).